Here is a 135-residue protein sequence, read N- to C-terminus: Small ribosomal subunit protein uS12 (135 aa).

At Asp-89 the chain carries 3-methylthioaspartic acid. The disordered stretch occupies residues 114–135 (RSRYGAKKGAAKQAAAAKSKKK). A compositionally biased stretch (low complexity) spans 124 to 135 (AKQAAAAKSKKK).

This sequence belongs to the universal ribosomal protein uS12 family. As to quaternary structure, part of the 30S ribosomal subunit. Contacts proteins S8 and S17. May interact with IF1 in the 30S initiation complex.

In terms of biological role, with S4 and S5 plays an important role in translational accuracy. Interacts with and stabilizes bases of the 16S rRNA that are involved in tRNA selection in the A site and with the mRNA backbone. Located at the interface of the 30S and 50S subunits, it traverses the body of the 30S subunit contacting proteins on the other side and probably holding the rRNA structure together. The combined cluster of proteins S8, S12 and S17 appears to hold together the shoulder and platform of the 30S subunit. The protein is Small ribosomal subunit protein uS12 of Amoebophilus asiaticus (strain 5a2).